We begin with the raw amino-acid sequence, 153 residues long: Regulator of sigma D (153 aa).

This sequence belongs to the Rsd/AlgQ family. Interacts with RpoD.

Its subcellular location is the cytoplasm. In terms of biological role, binds RpoD and negatively regulates RpoD-mediated transcription activation by preventing the interaction between the primary sigma factor RpoD with the catalytic core of the RNA polymerase and with promoter DNA. May be involved in replacement of the RNA polymerase sigma subunit from RpoD to RpoS during the transition from exponential growth to the stationary phase. This Pectobacterium atrosepticum (strain SCRI 1043 / ATCC BAA-672) (Erwinia carotovora subsp. atroseptica) protein is Regulator of sigma D.